The sequence spans 158 residues: NADH-quinone oxidoreductase subunit B (158 aa).

[4Fe-4S] cluster is bound by residues cysteine 37, cysteine 38, cysteine 102, and cysteine 132.

It belongs to the complex I 20 kDa subunit family. NDH-1 is composed of 14 different subunits. Subunits NuoB, C, D, E, F, and G constitute the peripheral sector of the complex. [4Fe-4S] cluster is required as a cofactor.

It is found in the cell inner membrane. It catalyses the reaction a quinone + NADH + 5 H(+)(in) = a quinol + NAD(+) + 4 H(+)(out). NDH-1 shuttles electrons from NADH, via FMN and iron-sulfur (Fe-S) centers, to quinones in the respiratory chain. Couples the redox reaction to proton translocation (for every two electrons transferred, four hydrogen ions are translocated across the cytoplasmic membrane), and thus conserves the redox energy in a proton gradient. This Leptothrix cholodnii (strain ATCC 51168 / LMG 8142 / SP-6) (Leptothrix discophora (strain SP-6)) protein is NADH-quinone oxidoreductase subunit B.